A 219-amino-acid chain; its full sequence is Ribose-5-phosphate isomerase A (219 aa).

Substrate contacts are provided by residues 28 to 31 (TGST), 81 to 84 (DGAD), and 94 to 97 (KGGG). The Proton acceptor role is filled by glutamate 103. Lysine 121 serves as a coordination point for substrate.

The protein belongs to the ribose 5-phosphate isomerase family. As to quaternary structure, homodimer.

It carries out the reaction aldehydo-D-ribose 5-phosphate = D-ribulose 5-phosphate. It participates in carbohydrate degradation; pentose phosphate pathway; D-ribose 5-phosphate from D-ribulose 5-phosphate (non-oxidative stage): step 1/1. Functionally, catalyzes the reversible conversion of ribose-5-phosphate to ribulose 5-phosphate. The polypeptide is Ribose-5-phosphate isomerase A (Shewanella sp. (strain MR-4)).